The sequence spans 486 residues: Fructose dehydrogenase cytochrome subunit (486 aa).

Positions 1–25 (MRYFRPLSATAMTTVLLLAGTNVRA) are cleaved as a signal peptide. Cytochrome c domains lie at 38–142 (PSIS…MTEV), 186–294 (DDWN…RSVP), and 330–423 (TKTT…LSHF). Residues C52, C55, H56, C201, C204, H205, C343, C346, and H347 each coordinate heme c. Residues 458-478 (LLGTGGILGAILVVAGLWWLI) form a helical membrane-spanning segment.

Heterotrimer composed of FdhL, FdhS and FdhC. In terms of processing, binds 3 heme c groups covalently per subunit.

Its subcellular location is the cell membrane. Functionally, cytochrome subunit of fructose dehydrogenase, an enzyme that catalyzes the oxidation of D-fructose to produce 5-keto-D-fructose. In the complex, mediates both the electron transfer to ubiquinone and the anchoring of the complex to the membrane. The chain is Fructose dehydrogenase cytochrome subunit (fdhC) from Gluconobacter japonicus.